A 310-amino-acid chain; its full sequence is p-hydroxybenzoic acid efflux pump subunit AaeA (310 aa).

A helical transmembrane segment spans residues 12-32 (AITLVLVILAFIAIFRAWVYY).

The protein belongs to the membrane fusion protein (MFP) (TC 8.A.1) family.

It localises to the cell inner membrane. Functionally, forms an efflux pump with AaeB. This Citrobacter koseri (strain ATCC BAA-895 / CDC 4225-83 / SGSC4696) protein is p-hydroxybenzoic acid efflux pump subunit AaeA.